Reading from the N-terminus, the 210-residue chain is 7-methyl-GTP pyrophosphatase (210 aa).

The Proton acceptor role is filled by Asp-79.

It belongs to the Maf family. YceF subfamily. A divalent metal cation is required as a cofactor.

It is found in the cytoplasm. The enzyme catalyses N(7)-methyl-GTP + H2O = N(7)-methyl-GMP + diphosphate + H(+). In terms of biological role, nucleoside triphosphate pyrophosphatase that hydrolyzes 7-methyl-GTP (m(7)GTP). May have a dual role in cell division arrest and in preventing the incorporation of modified nucleotides into cellular nucleic acids. The polypeptide is 7-methyl-GTP pyrophosphatase (Burkholderia lata (strain ATCC 17760 / DSM 23089 / LMG 22485 / NCIMB 9086 / R18194 / 383)).